Here is a 176-residue protein sequence, read N- to C-terminus: Ubiquitin-conjugating enzyme E2-20 kDa (176 aa).

A compositionally biased stretch (polar residues) spans 1 to 20 (MDSDMQNQNPHTNSKNSSSA). Residues 1–25 (MDSDMQNQNPHTNSKNSSSAGMAVD) are disordered. Residues 28-175 (SVTKRLRSEL…LMQRYKEIDE (148 aa)) enclose the UBC core domain. The active-site Glycyl thioester intermediate is Cys113.

This sequence belongs to the ubiquitin-conjugating enzyme family.

The enzyme catalyses S-ubiquitinyl-[E1 ubiquitin-activating enzyme]-L-cysteine + [E2 ubiquitin-conjugating enzyme]-L-cysteine = [E1 ubiquitin-activating enzyme]-L-cysteine + S-ubiquitinyl-[E2 ubiquitin-conjugating enzyme]-L-cysteine.. The protein operates within protein modification; protein ubiquitination. Functionally, catalyzes the covalent attachment of ubiquitin to other proteins. This chain is Ubiquitin-conjugating enzyme E2-20 kDa (ubc11), found in Schizosaccharomyces pombe (strain 972 / ATCC 24843) (Fission yeast).